Here is a 426-residue protein sequence, read N- to C-terminus: UDP-N-acetylglucosamine 1-carboxyvinyltransferase (426 aa).

A phosphoenolpyruvate-binding site is contributed by 22-23 (KN). R94 provides a ligand contact to UDP-N-acetyl-alpha-D-glucosamine. Catalysis depends on C118, which acts as the Proton donor. C118 carries the 2-(S-cysteinyl)pyruvic acid O-phosphothioketal modification. Residues 123–127 (RPVDL), D310, and I332 each bind UDP-N-acetyl-alpha-D-glucosamine.

It belongs to the EPSP synthase family. MurA subfamily.

The protein resides in the cytoplasm. It carries out the reaction phosphoenolpyruvate + UDP-N-acetyl-alpha-D-glucosamine = UDP-N-acetyl-3-O-(1-carboxyvinyl)-alpha-D-glucosamine + phosphate. It participates in cell wall biogenesis; peptidoglycan biosynthesis. Its function is as follows. Cell wall formation. Adds enolpyruvyl to UDP-N-acetylglucosamine. In Hyphomonas neptunium (strain ATCC 15444), this protein is UDP-N-acetylglucosamine 1-carboxyvinyltransferase.